Here is a 324-residue protein sequence, read N- to C-terminus: Tetrahydromethanopterin:alpha-L-glutamate ligase (324 aa).

The 209-residue stretch at 113 to 321 folds into the ATP-grasp domain; it reads SYLLARAGLP…PAEYILEYLQ (209 aa). Residues lysine 148, 195 to 204, and arginine 220 contribute to the ATP site; that span reads QEFIENPGRD. Residue aspartate 265 participates in Mg(2+) binding. Residue aspartate 265 coordinates Mn(2+). Positions 274-293 are disordered; sequence TGNENKKTEDKSTGQGSRIL. Mg(2+) is bound by residues glutamate 294 and asparagine 296. Residues glutamate 294 and asparagine 296 each coordinate Mn(2+).

This sequence belongs to the RimK family. MptN subfamily. In terms of assembly, homodimer. The cofactor is Mg(2+). Requires Mn(2+) as cofactor.

The enzyme catalyses 5,6,7,8-tetrahydromethanopterin + L-glutamate + ATP = 5,6,7,8-tetrahydrosarcinapterin + ADP + phosphate + H(+). Its pathway is cofactor biosynthesis; 5,6,7,8-tetrahydrosarcinapterin biosynthesis. Catalyzes the ATP or GTP-dependent addition of one L-glutamate molecule to tetrahydromethanopterin, producing tetrahydrosarcinapterin. This is Tetrahydromethanopterin:alpha-L-glutamate ligase (mptN) from Methanosarcina acetivorans (strain ATCC 35395 / DSM 2834 / JCM 12185 / C2A).